The chain runs to 155 residues: Endoribonuclease YbeY (155 aa).

His114, His118, and His124 together coordinate Zn(2+).

Belongs to the endoribonuclease YbeY family. It depends on Zn(2+) as a cofactor.

The protein localises to the cytoplasm. In terms of biological role, single strand-specific metallo-endoribonuclease involved in late-stage 70S ribosome quality control and in maturation of the 3' terminus of the 16S rRNA. This chain is Endoribonuclease YbeY, found in Cronobacter sakazakii (strain ATCC BAA-894) (Enterobacter sakazakii).